The following is a 584-amino-acid chain: Eukaryotic translation initiation factor 3 subunit D (584 aa).

Residues 118–184 form a disordered region; that stretch reads IFTRGRGQRG…KDYDKPQRNR (67 aa). Gly residues predominate over residues 127–167; that stretch reads GRGGQDTRGGGRQQFQRGGRGGQQYGGGGYSDRGGGRGGGA. Over residues 173–184 the composition is skewed to basic and acidic residues; it reads GWKDYDKPQRNR. Residues 312–326 form an RNA gate region; sequence ALDMVTVNENAADAP. Residues 563 to 584 are disordered; that stretch reads PANGLDDDDEGPEPEGVAEEED. Positions 567–584 are enriched in acidic residues; sequence LDDDDEGPEPEGVAEEED.

Belongs to the eIF-3 subunit D family. In terms of assembly, component of the eukaryotic translation initiation factor 3 (eIF-3) complex.

It localises to the cytoplasm. MRNA cap-binding component of the eukaryotic translation initiation factor 3 (eIF-3) complex, which is involved in protein synthesis of a specialized repertoire of mRNAs and, together with other initiation factors, stimulates binding of mRNA and methionyl-tRNAi to the 40S ribosome. The eIF-3 complex specifically targets and initiates translation of a subset of mRNAs involved in cell proliferation. In the eIF-3 complex, eif3d specifically recognizes and binds the 7-methylguanosine cap of a subset of mRNAs. The polypeptide is Eukaryotic translation initiation factor 3 subunit D (Chaetomium globosum (strain ATCC 6205 / CBS 148.51 / DSM 1962 / NBRC 6347 / NRRL 1970) (Soil fungus)).